The sequence spans 64 residues: Conotoxin reg3.16 (64 aa).

The N-terminal stretch at 1–19 is a signal peptide; that stretch reads MSKLGVFLTICLLLFPLTA. A propeptide spanning residues 20–49 is cleaved from the precursor; the sequence is LQLDGDQPADKPAQRKLKILPKRKHWTRFT. Disulfide bonds link C50–C64, C51–C60, and C56–C63.

This sequence belongs to the conotoxin M superfamily. As to expression, expressed by the venom duct.

The protein resides in the secreted. This chain is Conotoxin reg3.16, found in Conus regius (Crown cone).